Here is a 276-residue protein sequence, read N- to C-terminus: MRTVSTVAELRAALPREGVGFVPTMGYLHRGHLALVERARRENPFVVVSVFVNPLQFGPGEDYHRYPRDLERDRALLQEAGVDLLFAPGVEEMYPEGFATRVQVEGPLTALWEGAVRPGHFQGVATVVARLFLLVQPQRAYFGEKDYQQLLVVRRMVRDLGFPVEVVGVPTVREEDGLALSSRNVYLSPETRKKAPVLYRALLAMREVAGQGGSVAEALRAGEEALRAVPEFRKDYLAIVHPETLLPLSDWVAGARGIVAGRFPEARLIDNLEVYP.

25–32 serves as a coordination point for ATP; the sequence is MGYLHRGH. His-32 serves as the catalytic Proton donor. Gln-56 lines the (R)-pantoate pocket. Residue Gln-56 participates in beta-alanine binding. Residue 143 to 146 coordinates ATP; that stretch reads GEKD. Gln-149 is a binding site for (R)-pantoate. ATP contacts are provided by residues Val-172 and 180–183; that span reads LSSR.

This sequence belongs to the pantothenate synthetase family. In terms of assembly, homodimer.

The protein localises to the cytoplasm. The catalysed reaction is (R)-pantoate + beta-alanine + ATP = (R)-pantothenate + AMP + diphosphate + H(+). The protein operates within cofactor biosynthesis; (R)-pantothenate biosynthesis; (R)-pantothenate from (R)-pantoate and beta-alanine: step 1/1. Its function is as follows. Catalyzes the condensation of pantoate with beta-alanine in an ATP-dependent reaction via a pantoyl-adenylate intermediate. The chain is Pantothenate synthetase from Thermus thermophilus (strain ATCC BAA-163 / DSM 7039 / HB27).